We begin with the raw amino-acid sequence, 162 residues long: UPF0262 protein Pden_1958 (162 aa).

Residues 1–22 (MSQSANRLCRIDIDDSALPPPS) are disordered.

It belongs to the UPF0262 family.

In Paracoccus denitrificans (strain Pd 1222), this protein is UPF0262 protein Pden_1958.